Here is a 399-residue protein sequence, read N- to C-terminus: Bone morphogenetic protein 8B (399 aa).

A signal peptide spans 1 to 19; the sequence is MAARPGLLWLLGLALCVLG. Positions 20–260 are excised as a propeptide; the sequence is GGHLSHPPHV…ANQSPVRAPR (241 aa). Residues Asn-155 and Asn-340 are each glycosylated (N-linked (GlcNAc...) asparagine). 3 disulfides stabilise this stretch: Cys-298/Cys-364, Cys-327/Cys-396, and Cys-331/Cys-398.

This sequence belongs to the TGF-beta family. In terms of assembly, homodimer; disulfide-linked. In terms of tissue distribution, expressed in testis. Expressed in decidual cells of the uterus and in trophoblast cells of the labyrinthine region of the placenta and in the inner root sheath of hair follicles of early postnatal skin. Expressed in the extraembryonic ectoderm in pregastrula and gastrula stage mouse embryos. Expressed in brown adipose tissue and brain.

The protein resides in the secreted. In terms of biological role, induces cartilage and bone formation. May be the osteoinductive factor responsible for the phenomenon of epithelial osteogenesis. Plays a role in calcium regulation and bone homeostasis. Involved in the generation of primordial germ cells; this function involves Bmp4 in a synergistic manner though separate receptor complexes seem to be involved. Required for the initiation and maintenance of spermatogenesis. Signaling protein involved in regulation of thermogenesis and energy balance. Proposed to increase the peripheral response of brown adipose tissue (BAT) to adrenergic stimulation while acting centrally in the hypothalamus to increase sympathetic output to BAT. The protein is Bone morphogenetic protein 8B (Bmp8b) of Mus musculus (Mouse).